We begin with the raw amino-acid sequence, 517 residues long: uncharacterized protein (517 aa).

The next 10 membrane-spanning stretches (helical) occupy residues 35-55 (FSLI…IPGI), 81-101 (IAIY…GVFN), 102-122 (IGIS…ILKV), 135-155 (IITI…VAAL), 164-184 (VVSA…LVGT), 223-243 (LVIA…TVFG), 268-288 (FLSF…VYTA), 302-322 (FGIT…LIAL), 328-348 (IVIV…AGLN), and 352-372 (ASLV…MIYI).

Its subcellular location is the cell membrane. This is an uncharacterized protein from Mycoplasma pneumoniae (strain ATCC 29342 / M129 / Subtype 1) (Mycoplasmoides pneumoniae).